Here is a 190-residue protein sequence, read N- to C-terminus: UPF0301 protein TC_0483 (190 aa).

The protein belongs to the UPF0301 (AlgH) family.

This Chlamydia muridarum (strain MoPn / Nigg) protein is UPF0301 protein TC_0483.